Reading from the N-terminus, the 505-residue chain is Histidine ammonia-lyase (505 aa).

The 5-imidazolinone (Ala-Gly) cross-link spans Ala141–Gly143. Ser142 is subject to 2,3-didehydroalanine (Ser).

It belongs to the PAL/histidase family. Contains an active site 4-methylidene-imidazol-5-one (MIO), which is formed autocatalytically by cyclization and dehydration of residues Ala-Ser-Gly.

Its subcellular location is the cytoplasm. It carries out the reaction L-histidine = trans-urocanate + NH4(+). Its pathway is amino-acid degradation; L-histidine degradation into L-glutamate; N-formimidoyl-L-glutamate from L-histidine: step 1/3. This chain is Histidine ammonia-lyase, found in Bacillus cytotoxicus (strain DSM 22905 / CIP 110041 / 391-98 / NVH 391-98).